Here is a 274-residue protein sequence, read N- to C-terminus: Phosphate import ATP-binding protein PstB (274 aa).

The ABC transporter domain occupies 28–269; it reads VTVRDLNFYY…PNDRRTQDYI (242 aa). An ATP-binding site is contributed by 60–67; it reads GPSGCGKS.

This sequence belongs to the ABC transporter superfamily. Phosphate importer (TC 3.A.1.7) family. As to quaternary structure, the complex is composed of two ATP-binding proteins (PstB), two transmembrane proteins (PstC and PstA) and a solute-binding protein (PstS).

It is found in the cell inner membrane. It catalyses the reaction phosphate(out) + ATP + H2O = ADP + 2 phosphate(in) + H(+). Functionally, part of the ABC transporter complex PstSACB involved in phosphate import. Responsible for energy coupling to the transport system. The sequence is that of Phosphate import ATP-binding protein PstB from Rhodopseudomonas palustris (strain HaA2).